We begin with the raw amino-acid sequence, 319 residues long: Taste receptor type 2 member 39 (319 aa).

Residues 1–16 (MAQPSNYWKQDLLPLS) are Extracellular-facing. The chain crosses the membrane as a helical span at residues 17-37 (ILILTLVATECTIGIIASGII). The Cytoplasmic segment spans residues 38–56 (TVVNAVSWVQKRAVSITTR). A helical membrane pass occupies residues 57–77 (ILLLLSVSRIGLQSIILIEMT). The Extracellular segment spans residues 78-97 (SSIFNFSSYNSVLYRVSRVS). The N-linked (GlcNAc...) asparagine glycan is linked to N82. Residues 98–118 (FVFLNYCSLWFAALLSFFHFV) form a helical membrane-spanning segment. At 119 to 137 (KIANFSYPLFFKLKWRISE) the chain is on the cytoplasmic side. Residues 138 to 158 (LMPWLLWLSVFISFSSSMFFC) form a helical membrane-spanning segment. The Extracellular portion of the chain corresponds to 159-187 (NHKYTVYNNISLSSNICNFTMELYVAEAN). Residues N167 and N176 are each glycosylated (N-linked (GlcNAc...) asparagine). The helical transmembrane segment at 188–208 (VVNVAFLFSFGILPPLTMFIA) threads the bilayer. The Cytoplasmic portion of the chain corresponds to 209–247 (TATLLIFSLRRHTLHMRNGDADSRNPRVEAHKQAIKETS). A helical transmembrane segment spans residues 248-268 (CFLFLYILYAAVLFLSTSNIA). The Extracellular segment spans residues 269 to 273 (DASLF). A helical membrane pass occupies residues 274–294 (WSSVLRISLPVYPAGHSVLLI). Residues 295 to 319 (QSNPGLKRTWKQLLSQIHLHLQSRY) are Cytoplasmic-facing.

It belongs to the G-protein coupled receptor T2R family.

The protein localises to the membrane. Its function is as follows. Putative taste receptor which may play a role in the perception of bitterness. The polypeptide is Taste receptor type 2 member 39 (Rattus norvegicus (Rat)).